The sequence spans 664 residues: Cytoskeleton-associated protein 2 (664 aa).

Residues 1–38 (MAESRKRFLGRAARNPLPVTRDLQLPPTRRDQPAFREQ) form a disordered region. Over residues 28-38 (TRRDQPAFREQ) the composition is skewed to basic and acidic residues. Positions 160-319 (PKQDSNVSKK…ASKDAARTDS (160 aa)) are association with alpha- and beta-tubulin. A Phosphoserine modification is found at S186. Disordered regions lie at residues 254–273 (IRSL…SRPL), 283–328 (LDKE…MVKP), 366–393 (GKGK…NPVG), and 512–545 (AHAT…KVEV). The span at 300-309 (GSSQAPSRSI) shows a compositional bias: polar residues. A compositionally biased stretch (basic residues) spans 366–375 (GKGKGLKRPP). Over residues 533 to 545 (PGEENEHHGKVEV) the composition is skewed to basic and acidic residues. A Phosphothreonine modification is found at T561. Residue S577 is modified to Phosphoserine. T579 carries the phosphothreonine modification. The residue at position 584 (S584) is a Phosphoserine.

Belongs to the CKAP2 family. As to quaternary structure, associates with alpha- and beta-tubulins.

The protein localises to the cytoplasm. It is found in the cytoskeleton. It localises to the spindle. Its subcellular location is the spindle pole. In terms of biological role, possesses microtubule stabilizing properties. Involved in regulating aneuploidy, cell cycling, and cell death in a p53-dependent manner. The chain is Cytoskeleton-associated protein 2 from Mus musculus (Mouse).